The chain runs to 104 residues: Nucleoid-associated protein Amuc_1227 (104 aa).

Belongs to the YbaB/EbfC family. In terms of assembly, homodimer.

It is found in the cytoplasm. Its subcellular location is the nucleoid. In terms of biological role, binds to DNA and alters its conformation. May be involved in regulation of gene expression, nucleoid organization and DNA protection. The polypeptide is Nucleoid-associated protein Amuc_1227 (Akkermansia muciniphila (strain ATCC BAA-835 / DSM 22959 / JCM 33894 / BCRC 81048 / CCUG 64013 / CIP 107961 / Muc)).